A 100-amino-acid polypeptide reads, in one-letter code: Protein translation factor SUI1 homolog (100 aa).

The protein belongs to the SUI1 family.

The chain is Protein translation factor SUI1 homolog from Sulfurisphaera tokodaii (strain DSM 16993 / JCM 10545 / NBRC 100140 / 7) (Sulfolobus tokodaii).